A 323-amino-acid chain; its full sequence is tRNA U34 carboxymethyltransferase (323 aa).

Carboxy-S-adenosyl-L-methionine contacts are provided by residues Lys-91, Trp-105, Lys-110, Gly-130, 181–182 (IE), Met-196, Tyr-200, and Arg-315.

Belongs to the class I-like SAM-binding methyltransferase superfamily. CmoB family. Homotetramer.

The enzyme catalyses carboxy-S-adenosyl-L-methionine + 5-hydroxyuridine(34) in tRNA = 5-carboxymethoxyuridine(34) in tRNA + S-adenosyl-L-homocysteine + H(+). Functionally, catalyzes carboxymethyl transfer from carboxy-S-adenosyl-L-methionine (Cx-SAM) to 5-hydroxyuridine (ho5U) to form 5-carboxymethoxyuridine (cmo5U) at position 34 in tRNAs. The sequence is that of tRNA U34 carboxymethyltransferase from Enterobacter sp. (strain 638).